Here is a 36-residue protein sequence, read N- to C-terminus: Photosystem I reaction center subunit VIII (36 aa).

Residues 10–29 (FVPLVGLVFPAIAMASLFLY) traverse the membrane as a helical segment.

The protein belongs to the PsaI family.

It is found in the plastid. The protein resides in the chloroplast thylakoid membrane. Functionally, may help in the organization of the PsaL subunit. This chain is Photosystem I reaction center subunit VIII, found in Oryza nivara (Indian wild rice).